A 237-amino-acid chain; its full sequence is Sugar fermentation stimulation protein homolog (237 aa).

The protein belongs to the SfsA family.

This chain is Sugar fermentation stimulation protein homolog, found in Pseudomonas putida (strain GB-1).